A 670-amino-acid chain; its full sequence is Segment polarity protein dishevelled homolog DVL-1 (670 aa).

One can recognise a DIX domain in the interval 1–85 (MAETKIIYHM…RVVSWLVLAE (85 aa)). The interval 89 to 237 (SDAGSQGTDS…LRQADRASSF (149 aa)) is disordered. Residues 142-151 (SHRRERARRR) show a composition bias toward basic residues. The segment covering 152-171 (NREEAARTNGHPRGDRRRDV) has biased composition (basic and acidic residues). Positions 176-192 (DSASTALSSELESSSFV) are enriched in low complexity. Ser-194 bears the Phosphoserine mark. Positions 200–214 (TSRLSSSTEQSTSSR) are enriched in low complexity. Residues 215-228 (LIRKHKRRRRKQRL) are compositionally biased toward basic residues. One can recognise a PDZ domain in the interval 251–323 (TVTLNMERHH…NDDAVRVLRE (73 aa)). Residues 400 to 474 (PDSGLEIRDR…SEQCYYVFGD (75 aa)) enclose the DEP domain. A disordered region spans residues 518–642 (PGPPPCFPPA…PGGPPVRELA (125 aa)). Positions 526 to 555 (PAYQDPGFSYGSGSTGSQQSEGSKSSGSTR) are enriched in low complexity. A compositionally biased stretch (polar residues) spans 600–611 (SRGSSPRSQASA).

The protein belongs to the DSH family. In terms of assembly, interacts with CXXC4. Interacts (via PDZ domain) with NXN. Interacts with BRD7 and INVS. Interacts (via PDZ domain) with VANGL1 and VANGL2 (via C-terminus). Interacts with ARRB1; the interaction is enhanced by phosphorylation of DVL1. Interacts with CYLD. Interacts (via PDZ domain) with RYK. Self-associates (via DIX domain) and forms higher homooligomers. Interacts (via PDZ domain) with DACT1 and FZD7, where DACT1 and FZD7 compete for the same binding site. Interacts (via DEP domain) with MUSK; the interaction is direct and mediates the formation a DVL1, MUSK and PAK1 ternary complex involved in AChR clustering. Interacts (via PDZ domain) with TMEM88. Interacts with DCDC2. Interacts with FOXK2. Interacts with PKD1 (via extracellular domain). Interacts (via PDZ domain) with CCDC88C/DAPLE; competes with CCDC88C for binding to frizzled receptor FZD7 and dissociates from CCDC88C following initiation of non-canonical Wnt signaling when CCDC88C displaces DVL1 from ligand-activated FZD7. Post-translationally, ubiquitinated; undergoes both 'Lys-48'-linked ubiquitination, leading to its subsequent degradation by the ubiquitin-proteasome pathway, and 'Lys-63'-linked ubiquitination. The interaction with INVS is required for ubiquitination. Deubiquitinated by CYLD, which acts on 'Lys-63'-linked ubiquitin chains.

It is found in the cell membrane. Its subcellular location is the cytoplasm. The protein resides in the cytosol. It localises to the cytoplasmic vesicle. Functionally, participates in Wnt signaling by binding to the cytoplasmic C-terminus of frizzled family members and transducing the Wnt signal to down-stream effectors. Plays a role both in canonical and non-canonical Wnt signaling. Plays a role in the signal transduction pathways mediated by multiple Wnt genes. Required for LEF1 activation upon WNT1 and WNT3A signaling. DVL1 and PAK1 form a ternary complex with MUSK which is important for MUSK-dependent regulation of AChR clustering during the formation of the neuromuscular junction (NMJ). This Pan troglodytes (Chimpanzee) protein is Segment polarity protein dishevelled homolog DVL-1 (DVL1).